The sequence spans 609 residues: Protein KINESIN LIGHT CHAIN-RELATED 1 (609 aa).

A disordered region spans residues methionine 1–proline 77. Residues lysine 38–serine 55 are compositionally biased toward low complexity. TPR repeat units lie at residues alanine 140 to threonine 173, phenylalanine 183 to threonine 216, glycine 225 to histidine 258, alanine 267 to glycine 301, alanine 307 to serine 340, alanine 349 to proline 382, alanine 392 to lysine 425, alanine 433 to alanine 466, glycine 474 to glutamate 507, and leucine 516 to lysine 549. Positions leucine 582–phenylalanine 609 are disordered.

This sequence belongs to the kinesin light chain family. As to quaternary structure, interacts with IQD1.

It is found in the cytoplasm. It localises to the cytoskeleton. In Arabidopsis thaliana (Mouse-ear cress), this protein is Protein KINESIN LIGHT CHAIN-RELATED 1.